The sequence spans 153 residues: MASLPKRIIKETEKLVSDPVPGITAEPHDDNLRYFQVTIEGPEQSPYEDGIFELELYLPDDYPMEAPKVRFLTKIYHPNIDRLGRICLDVLKTNWSPALQIRTVLLSIQALLASPNPNDPLANDVAEDWIKNEQGAKAKAREWTKLYAKKKPE.

A UBC core domain is found at 3 to 149; that stretch reads SLPKRIIKET…AREWTKLYAK (147 aa). Cysteine 87 (glycyl thioester intermediate) is an active-site residue. Lysine 92 is covalently cross-linked (Glycyl lysine isopeptide (Lys-Gly) (interchain with G-Cter in ubiquitin)).

It belongs to the ubiquitin-conjugating enzyme family. Heterodimer with MMS2.

It carries out the reaction S-ubiquitinyl-[E1 ubiquitin-activating enzyme]-L-cysteine + [E2 ubiquitin-conjugating enzyme]-L-cysteine = [E1 ubiquitin-activating enzyme]-L-cysteine + S-ubiquitinyl-[E2 ubiquitin-conjugating enzyme]-L-cysteine.. The protein operates within protein modification; protein ubiquitination. Functionally, has a role in the DNA error-free postreplication repair (PRR) pathway. The UBC13/MMS2 heterodimer catalyzes the synthesis of non-canonical poly-ubiquitin chains that are linked through 'Lys-63'. The chain is Ubiquitin-conjugating enzyme E2 13 (UBC13) from Saccharomyces cerevisiae (strain ATCC 204508 / S288c) (Baker's yeast).